A 480-amino-acid chain; its full sequence is UDP-N-acetylmuramoylalanine--D-glutamate ligase (480 aa).

Position 127-133 (127-133) interacts with ATP; sequence GTNGKTT.

This sequence belongs to the MurCDEF family.

Its subcellular location is the cytoplasm. It catalyses the reaction UDP-N-acetyl-alpha-D-muramoyl-L-alanine + D-glutamate + ATP = UDP-N-acetyl-alpha-D-muramoyl-L-alanyl-D-glutamate + ADP + phosphate + H(+). Its pathway is cell wall biogenesis; peptidoglycan biosynthesis. Its function is as follows. Cell wall formation. Catalyzes the addition of glutamate to the nucleotide precursor UDP-N-acetylmuramoyl-L-alanine (UMA). In Tropheryma whipplei (strain Twist) (Whipple's bacillus), this protein is UDP-N-acetylmuramoylalanine--D-glutamate ligase.